The primary structure comprises 229 residues: Large ribosomal subunit protein uL1 (229 aa).

Belongs to the universal ribosomal protein uL1 family. In terms of assembly, part of the 50S ribosomal subunit.

Its function is as follows. Binds directly to 23S rRNA. The L1 stalk is quite mobile in the ribosome, and is involved in E site tRNA release. In terms of biological role, protein L1 is also a translational repressor protein, it controls the translation of the L11 operon by binding to its mRNA. The protein is Large ribosomal subunit protein uL1 of Streptococcus thermophilus (strain CNRZ 1066).